The primary structure comprises 266 residues: Energy-coupling factor transporter ATP-binding protein EcfA2 (266 aa).

Residues 3 to 238 form the ABC transporter domain; sequence IEVVNVSHIF…YDPRFFTSKM (236 aa). Residue 43–48 coordinates ATP; the sequence is GSGKST. Glu164 functions as the Proton acceptor in the catalytic mechanism. The segment at 220–266 is required for heterodimer formation; sequence GTRMEFLEKYDPRFFTSKMLVMRRLVLKGEDPFSMSDDELLERVCNS.

Belongs to the ABC transporter superfamily. Energy-coupling factor EcfA family. In terms of assembly, forms a heterodimer with EcfA1. Forms a stable energy-coupling factor (ECF) transporter complex composed of 2 membrane-embedded substrate-binding proteins (S component, RibU, BioY), 2 ATP-binding proteins (A component) and 2 transmembrane proteins (T component) upon coexpression in E.coli. Stable subcomplexes with both A plus T components can also be isolated. This complex interacts with at least 2 substrate-specific components, BioY and RibU.

The protein resides in the cell inner membrane. Functionally, ATP-binding (A) component of a common energy-coupling factor (ECF) ABC-transporter complex. Unlike classic ABC transporters this ECF transporter provides the energy necessary to transport a number of different substrates. Expression of the complex plus RibU in E.coli allows riboflavin uptake; uptake does not occur in the absence of RibU or the EcfA1A2T complex. The polypeptide is Energy-coupling factor transporter ATP-binding protein EcfA2 (ecfA2) (Thermotoga maritima (strain ATCC 43589 / DSM 3109 / JCM 10099 / NBRC 100826 / MSB8)).